The following is a 1438-amino-acid chain: DNA polymerase III PolC-type (1438 aa).

Residues 422-578 form the Exonuclease domain; it reads YVVFDVETTG…YDTEATAYMF (157 aa).

Belongs to the DNA polymerase type-C family. PolC subfamily.

Its subcellular location is the cytoplasm. It carries out the reaction DNA(n) + a 2'-deoxyribonucleoside 5'-triphosphate = DNA(n+1) + diphosphate. In terms of biological role, required for replicative DNA synthesis. This DNA polymerase also exhibits 3' to 5' exonuclease activity. The sequence is that of DNA polymerase III PolC-type from Staphylococcus saprophyticus subsp. saprophyticus (strain ATCC 15305 / DSM 20229 / NCIMB 8711 / NCTC 7292 / S-41).